The following is a 765-amino-acid chain: Putative U-box domain-containing protein 50 (765 aa).

Residues 198 to 391 (QEIENYFQQL…NRRIEFCKER (194 aa)) are a coiled coil. The Protein kinase domain occupies 422–765 (SDRLRLKSGG…HSKRAAQASS (344 aa)). ATP-binding positions include 428–436 (KSGGNWTNV) and lysine 449. Positions 688–762 (DIPSVFMCPI…QDWHSKRAAQ (75 aa)) constitute a U-box domain.

Belongs to the protein kinase superfamily. Ser/Thr protein kinase family.

The catalysed reaction is S-ubiquitinyl-[E2 ubiquitin-conjugating enzyme]-L-cysteine + [acceptor protein]-L-lysine = [E2 ubiquitin-conjugating enzyme]-L-cysteine + N(6)-ubiquitinyl-[acceptor protein]-L-lysine.. Its pathway is protein modification; protein ubiquitination. Functions as an E3 ubiquitin ligase. The sequence is that of Putative U-box domain-containing protein 50 (PUB50) from Arabidopsis thaliana (Mouse-ear cress).